The chain runs to 247 residues: Uridylate kinase (247 aa).

Lys19–Gly22 serves as a coordination point for ATP. A UMP-binding site is contributed by Gly61. Residues Gly62 and Arg66 each coordinate ATP. Residues Asp81 and Thr142 to Thr149 contribute to the UMP site. The ATP site is built by Thr169, Gln170, Tyr175, and Asp178.

It belongs to the UMP kinase family. In terms of assembly, homohexamer.

The protein localises to the cytoplasm. The catalysed reaction is UMP + ATP = UDP + ADP. It functions in the pathway pyrimidine metabolism; CTP biosynthesis via de novo pathway; UDP from UMP (UMPK route): step 1/1. Its activity is regulated as follows. Inhibited by UTP. In terms of biological role, catalyzes the reversible phosphorylation of UMP to UDP. The chain is Uridylate kinase from Wolbachia pipientis wMel.